The primary structure comprises 89 residues: MSLSVEKKAAIVAEFGRDAKDTGSSEVQIALLTAQINHLQAHFAEHKKDHHGRRGLLRMVSRRRKLLDYLKRTDLAKYSETIARLGLRR.

The protein belongs to the universal ribosomal protein uS15 family. In terms of assembly, part of the 30S ribosomal subunit. Forms a bridge to the 50S subunit in the 70S ribosome, contacting the 23S rRNA.

One of the primary rRNA binding proteins, it binds directly to 16S rRNA where it helps nucleate assembly of the platform of the 30S subunit by binding and bridging several RNA helices of the 16S rRNA. Its function is as follows. Forms an intersubunit bridge (bridge B4) with the 23S rRNA of the 50S subunit in the ribosome. The protein is Small ribosomal subunit protein uS15 of Mannheimia succiniciproducens (strain KCTC 0769BP / MBEL55E).